We begin with the raw amino-acid sequence, 147 residues long: uncharacterized protein (147 aa).

2 4Fe-4S ferredoxin-type domains span residues 80–109 and 110–141; these read WYPK…AENG and KVVV…FPDE. [4Fe-4S] cluster-binding residues include cysteine 89, cysteine 92, cysteine 95, cysteine 99, cysteine 119, cysteine 123, cysteine 126, and cysteine 130.

The cofactor is [4Fe-4S] cluster.

This is an uncharacterized protein from Methanocaldococcus jannaschii (strain ATCC 43067 / DSM 2661 / JAL-1 / JCM 10045 / NBRC 100440) (Methanococcus jannaschii).